A 247-amino-acid polypeptide reads, in one-letter code: MSNQACFSNPGPELWNALGWHPSSEQLEQMIALQALLRQWNARVNLTRLVEGGDYWIMQVFDSLWPLQSELQNAQQPRRCIDIGSGGGFPGLVLAIALPGARITLVDSVGRKTAALKAMAAKLGLTSRVTVRSERAEFTGQDPCCRGLFDLAMARAVSTAPVVAEYLVPLLKPSGEALLFRGHWSPNDAKDLAKALRLLQADLIKMERRELPDNRGVRHQLRLRATLPCPATFPRPIGVPAKNPLGS.

S-adenosyl-L-methionine contacts are provided by residues Gly84, Phe89, 136–137 (AE), and Arg155.

The protein belongs to the methyltransferase superfamily. RNA methyltransferase RsmG family.

It is found in the cytoplasm. Functionally, specifically methylates the N7 position of a guanine in 16S rRNA. This is Ribosomal RNA small subunit methyltransferase G from Prochlorococcus marinus (strain MIT 9313).